A 120-amino-acid polypeptide reads, in one-letter code: Spermidine export protein MdtJ (120 aa).

A run of 4 helical transmembrane segments spans residues 1 to 21 (MFYW…TLSM), 31 to 51 (AGFI…SFAV), 54 to 74 (IALG…ITIF), and 81 to 101 (EALS…IVLI).

Belongs to the drug/metabolite transporter (DMT) superfamily. Small multidrug resistance (SMR) (TC 2.A.7.1) family. MdtJ subfamily. Forms a complex with MdtI.

It localises to the cell inner membrane. Its function is as follows. Catalyzes the excretion of spermidine. The sequence is that of Spermidine export protein MdtJ from Salmonella agona (strain SL483).